The primary structure comprises 160 residues: Large ribosomal subunit protein uL15 (160 aa).

Residues 1 to 13 (MKLNEIRDNEGAR) show a composition bias toward basic and acidic residues. The interval 1-41 (MKLNEIRDNEGARKSRIRVGRGIGSGKGKTGGRGVKGQKSR) is disordered. Residues 21-35 (RGIGSGKGKTGGRGV) show a composition bias toward gly residues.

It belongs to the universal ribosomal protein uL15 family. In terms of assembly, part of the 50S ribosomal subunit.

Its function is as follows. Binds to the 23S rRNA. In Parvibaculum lavamentivorans (strain DS-1 / DSM 13023 / NCIMB 13966), this protein is Large ribosomal subunit protein uL15.